The primary structure comprises 432 residues: Interleukin-11 receptor subunit alpha-2 (432 aa).

Positions 1-23 (MSSSCSGLTRVLVAVATALVSSS) are cleaved as a signal peptide. Over 24–372 (SPCPQAWGPP…DPLEQVAVLA (349 aa)) the chain is Extracellular. Residues 27-110 (PQAWGPPGVQ…SGGMVTLKLG (84 aa)) form the Ig-like C2-type domain. Disulfide bonds link C48–C94, C120–C130, and C170–C180. Fibronectin type-III domains lie at 112-219 (PPAR…LRPD) and 220-317 (PPQG…TPST). N127 is a glycosylation site (N-linked (GlcNAc...) asparagine). The tract at residues 151–170 (KTLPGAESQRESPSTGPWPC) is disordered. N194 is a glycosylation site (N-linked (GlcNAc...) asparagine). Positions 304-308 (WSAWS) match the WSXWS motif motif. Residues 373-393 (SLGIFSCLGLAVGALALGLWL) form a helical membrane-spanning segment. The Cytoplasmic portion of the chain corresponds to 394–432 (RLRRSGKEGPQKPGLLAPMIPVEKLPGIPNLQRTPENFS).

It belongs to the type I cytokine receptor family. Type 3 subfamily. On ligand binding, forms a multimer complex with IL6ST/gp130. In terms of tissue distribution, expression restricted to testis, lymph node and thymus. Highest level in testis.

It is found in the membrane. In terms of biological role, receptor for interleukin-11. The receptor systems for IL6, LIF, OSM, CNTF, IL11 and CT1 can utilize IL6ST for initiating signal transmission. The IL11/IL11RA/IL6ST complex may be involved in the control of proliferation and/or differentiation of skeletogenic progenitor or other mesenchymal cells. The chain is Interleukin-11 receptor subunit alpha-2 (Il11ra2) from Mus musculus (Mouse).